We begin with the raw amino-acid sequence, 487 residues long: MSDVYADWESVIGLEVHVELNTKSKLFSCARNRFGDEPNTNISPVCTGMPGSLPVLNKEAVRKAVLFGCAVEGEVALLSRFDRKSYFYPDSPRNFQITQFEHPIVRGGHIKAIVHGEERHFELAQAHIEDDAGMLKHFGEFAGVDYNRAGVPLIEIVSKPCMFCADDAVAYATALVSLLDYIGISDCNMEEGSVRFDVNISVRPKGSEELRNKVEIKNMNSFAFMAQALEAERCRQIDAYLDNPNADPKTVIPGATYRWDPEKKKTVLMRLKERAEDYKYFIEPDLPVLQLTEAYIDEIRHTLPELPFNKYQRYLHEYALAEDIAAILISDKHSAHFFELAAQECKNYRALSNWLTVEFAGRCKLKGKNLAFSGILPSSVAQLVNFIDQGVITGKIAKDIADMMMESPEKSPETILKENPEMLPMTDESALVAIISEVITANPQSVVDYKSGKTKALGFLVGQIMKRTQGKAPPNRVNELLLVELSK.

Belongs to the GatB/GatE family. GatB subfamily. Heterotrimer of A, B and C subunits.

It carries out the reaction L-glutamyl-tRNA(Gln) + L-glutamine + ATP + H2O = L-glutaminyl-tRNA(Gln) + L-glutamate + ADP + phosphate + H(+). The enzyme catalyses L-aspartyl-tRNA(Asn) + L-glutamine + ATP + H2O = L-asparaginyl-tRNA(Asn) + L-glutamate + ADP + phosphate + 2 H(+). Its function is as follows. Allows the formation of correctly charged Asn-tRNA(Asn) or Gln-tRNA(Gln) through the transamidation of misacylated Asp-tRNA(Asn) or Glu-tRNA(Gln) in organisms which lack either or both of asparaginyl-tRNA or glutaminyl-tRNA synthetases. The reaction takes place in the presence of glutamine and ATP through an activated phospho-Asp-tRNA(Asn) or phospho-Glu-tRNA(Gln). The polypeptide is Aspartyl/glutamyl-tRNA(Asn/Gln) amidotransferase subunit B (Chlamydia abortus (strain DSM 27085 / S26/3) (Chlamydophila abortus)).